Consider the following 921-residue polypeptide: MKNFWKISVFFCVCSCLGPWVSATLKRRARFPANSISNGGSELCPKIRIGQDDLPGFDLISQFQIEKAASRRTIQRVVGSTALQVAYKLGSNVDFRIPTRHLYPSGLPEEYSFLTTFRMTGSTLEKHWNIWQIQDSAGREQVGVKINGQTKSVAFSYKGLDGSLQTAAFLNLPSLFDSRWHKLMIGVERTSATLFIDCIRIESLPIKPRGQIDADGFAVLGKLVDNPQVSVPFELQWMLIHCDPLRPRRETCHELPIRITTSQTTDERGPPGEQGPPGPPGPPGVPGIDGIDGDRGPKGPPGPPGPPGDPGKPGAPGKPGTPGADGLTGPDGSPGSVGPRGQKGEPGVPGSRGFPGRGIPGPPGPPGTTGLPGELGRVGPIGDPGKRGPPGPPGPPGPSGTIGFHDGDPLCPNSCPPGRSGYPGLPGMRGHKGAKGEIGEPGRQGHKGEEGDQGELGEVGAQGPPGPQGLRGITGIVGDKGEKGARGFDGEPGPQGIPGAAGDQGQRGPPGETGPKGDRGIQGSRGIPGSPGPKGDTGLPGVDGRDGIPGMPGTKGEAGKPGPPGDVGLQGLPGVPGIPGAKGVAGEKGNTGAPGKPGQLGSSGKPGQQGPPGEVGPRGPRGLPGSRGPVGPEGSPGIPGKLGSVGSPGLPGLPGPPGLPGMKGDRGVFGEPGPKGEQGASGEEGEAGARGDLGDMGQPGPKGSVGNPGEPGLRGPEGIRGLPGVEGPRGPPGPRGMQGEQGATGLPGIQGPPGRAPTDQHIKQVCMRVVQEHFVEMAASLKRPDTGASGLPGRPGPPGPPGPPGENGFPGQMGIRGLPGIKGPPGALGLRGPKGDLGEKGERGPPGRGPKGLPGAIGLPGDPGPASYGKNGRDGEQGPPGVAGIPGVPGPPGPPGPPGFCEPASCTLQSGQRAFSKGPDK.

Residues 1-23 form the signal peptide; it reads MKNFWKISVFFCVCSCLGPWVSA. Positions 24 to 268 are nonhelical region (NC4); that stretch reads TLKRRARFPA…ITTSQTTDER (245 aa). 2 disulfide bridges follow: cysteine 44-cysteine 242 and cysteine 198-cysteine 252. In terms of domain architecture, Laminin G-like spans 50–244; the sequence is GQDDLPGFDL…LQWMLIHCDP (195 aa). Residues aspartate 213, aspartate 215, and histidine 253 each contribute to the Zn(2+) site. Disordered stretches follow at residues 253–759 and 783–921; these read HELP…APTD and RPDT…GPDK. Collagen-like domains follow at residues 269 to 325, 326 to 356, 358 to 403, 416 to 472, 473 to 512, 604 to 656, 657 to 711, and 712 to 755; these read GPPG…PGAD, GLTG…GFPG, GIPG…GTIG, PPGR…GLRG, ITGI…PPGE, GKPG…LPGP, PGLP…PGEP, and GLRG…PPGR. The segment at 269–405 is triple-helical region (COL3); sequence GPPGEQGPPG…PGPSGTIGFH (137 aa). Pro residues-rich tracts occupy residues 273–285 and 298–310; these read EQGP…PPGV and KGPP…PGDP. Over residues 368-383 the composition is skewed to low complexity; the sequence is TTGLPGELGRVGPIGD. Positions 387–398 are enriched in pro residues; the sequence is RGPPGPPGPPGP. The tract at residues 406 to 417 is nonhelical region (NC3); the sequence is DGDPLCPNSCPP. The triple-helical region (COL2) stretch occupies residues 418–756; sequence GRSGYPGLPG…PGIQGPPGRA (339 aa). Residues 479–489 show a composition bias toward basic and acidic residues; sequence DKGEKGARGFD. 2 stretches are compositionally biased toward low complexity: residues 594-632 and 639-650; these read PGKP…PVGP and PGKLGSVGSPGL. The interval 757–786 is nonhelical region (NC2); sequence PTDQHIKQVCMRVVQEHFVEMAASLKRPDT. Residues 787–901 are triple-helical region (COL1); the sequence is GASGLPGRPG…PGPPGPPGFC (115 aa). Positions 790-847 constitute a Collagen-like 9 domain; that stretch reads GLPGRPGPPGPPGPPGENGFPGQMGIRGLPGIKGPPGALGLRGPKGDLGEKGERGPPG. The span at 794-804 shows a compositional bias: pro residues; it reads RPGPPGPPGPP. Positions 833 to 845 are enriched in basic and acidic residues; it reads PKGDLGEKGERGP. The span at 888–900 shows a compositional bias: pro residues; that stretch reads VPGPPGPPGPPGF. Residues 902-921 form a nonhelical region (NC1) region; it reads EPASCTLQSGQRAFSKGPDK.

It belongs to the fibril-associated collagens with interrupted helices (FACIT) family. Heterotrimer of an alpha 1(IX), an alpha 2(IX) and an alpha 3(IX) chain. Covalently linked to the telopeptides of type II collagen by lysine-derived cross-links. In terms of processing, prolines at the third position of the tripeptide repeating unit (G-X-Y) are hydroxylated in some or all of the chains.

It is found in the secreted. It localises to the extracellular space. The protein resides in the extracellular matrix. Functionally, structural component of hyaline cartilage and vitreous of the eye. This Mus musculus (Mouse) protein is Collagen alpha-1(IX) chain (Col9a1).